The following is a 353-amino-acid chain: Phosphoribosylformylglycinamidine cyclo-ligase (353 aa).

The protein belongs to the AIR synthase family.

The protein resides in the cytoplasm. It carries out the reaction 2-formamido-N(1)-(5-O-phospho-beta-D-ribosyl)acetamidine + ATP = 5-amino-1-(5-phospho-beta-D-ribosyl)imidazole + ADP + phosphate + H(+). Its pathway is purine metabolism; IMP biosynthesis via de novo pathway; 5-amino-1-(5-phospho-D-ribosyl)imidazole from N(2)-formyl-N(1)-(5-phospho-D-ribosyl)glycinamide: step 2/2. In Pseudomonas aeruginosa (strain LESB58), this protein is Phosphoribosylformylglycinamidine cyclo-ligase.